Consider the following 275-residue polypeptide: Ribosomal RNA small subunit methyltransferase A (275 aa).

S-adenosyl-L-methionine-binding residues include Asn15, Leu17, Gly42, Glu63, Asp88, and Asn111.

The protein belongs to the class I-like SAM-binding methyltransferase superfamily. rRNA adenine N(6)-methyltransferase family. RsmA subfamily.

The protein resides in the cytoplasm. The enzyme catalyses adenosine(1518)/adenosine(1519) in 16S rRNA + 4 S-adenosyl-L-methionine = N(6)-dimethyladenosine(1518)/N(6)-dimethyladenosine(1519) in 16S rRNA + 4 S-adenosyl-L-homocysteine + 4 H(+). Specifically dimethylates two adjacent adenosines (A1518 and A1519) in the loop of a conserved hairpin near the 3'-end of 16S rRNA in the 30S particle. May play a critical role in biogenesis of 30S subunits. This chain is Ribosomal RNA small subunit methyltransferase A, found in Geobacter metallireducens (strain ATCC 53774 / DSM 7210 / GS-15).